The following is a 1136-amino-acid chain: Unconventional myosin-Ib (1136 aa).

A Myosin motor domain is found at 15–701; the sequence is IGVGDMVLLE…TLFKLEDLRK (687 aa). The residue at position 60 (S60) is a Phosphoserine. ATP is bound at residue 108 to 115; it reads GESGAGKT. A Glycyl lysine isopeptide (Lys-Gly) (interchain with G-Cter in SUMO1); alternate cross-link involves residue K287. Residue K287 forms a Glycyl lysine isopeptide (Lys-Gly) (interchain with G-Cter in SUMO2); alternate linkage. The tract at residues 578–600 is actin-binding; the sequence is VATLMKNLQTKNPNYIRCIKPND. 6 IQ domains span residues 704-733, 728-748, 750-779, 779-808, 808-837, and 837-866; these read LEDL…SQIV, KKSQ…KRYQ, TKSS…QKRC, CKEA…EARN, NKHA…EARR, and RKHA…ANAG. Positions 952–1136 constitute a TH1 domain; that stretch reads KALYPSSVGQ…NNRLLEVAVP (185 aa).

Belongs to the TRAFAC class myosin-kinesin ATPase superfamily. Myosin family.

In terms of biological role, motor protein that may participate in process critical to neuronal development and function such as cell migration, neurite outgrowth and vesicular transport. This Homo sapiens (Human) protein is Unconventional myosin-Ib (MYO1B).